Consider the following 292-residue polypeptide: MATSNSRPHLLQTHKPFSVVLAISITFFLLLLNKVNSAEILSFSFPKFASNQEDLLLQGDALVSSKGELQLTTVENGVPIWNSTGRALYYAPVHIWDKSTGRVASFATSFSFVVKAPVASKSADGIAFFLAPPNNQIQGPGGGHLGLFHSSGYNSSYQIIAVDFDTHINAWDPNTRHIGIDVNSINSTKTVTWGWQNGEVANVLISYQAATETLTVSLTYPSSQTSYILSAAVDLKSILPEWVRVGFTAATGLTTQYVETHDVLSWSFTSTLETGDCGAKDDNVHLVSYAFI.

The N-terminal stretch at 1–37 is a signal peptide; that stretch reads MATSNSRPHLLQTHKPFSVVLAISITFFLLLLNKVNS. N-linked (GlcNAc...) asparagine glycosylation is found at Asn82 and Asn154. Mn(2+) contacts are provided by Asp163 and Asp165. Residues Asp165, His167, Asn169, and Asp172 each contribute to the Ca(2+) site. The Mn(2+) site is built by Asp172 and His177. Asn186 carries N-linked (GlcNAc...) asparagine glycosylation.

It belongs to the leguminous lectin family.

Mannose/glucose-specific lectin. The protein is Seed lectin of Styphnolobium japonicum (Japanese pagoda tree).